The following is a 420-amino-acid chain: Gamma-glutamyl phosphate reductase (420 aa).

It belongs to the gamma-glutamyl phosphate reductase family.

It is found in the cytoplasm. The catalysed reaction is L-glutamate 5-semialdehyde + phosphate + NADP(+) = L-glutamyl 5-phosphate + NADPH + H(+). The protein operates within amino-acid biosynthesis; L-proline biosynthesis; L-glutamate 5-semialdehyde from L-glutamate: step 2/2. Functionally, catalyzes the NADPH-dependent reduction of L-glutamate 5-phosphate into L-glutamate 5-semialdehyde and phosphate. The product spontaneously undergoes cyclization to form 1-pyrroline-5-carboxylate. The protein is Gamma-glutamyl phosphate reductase of Pasteurella multocida (strain Pm70).